Consider the following 450-residue polypeptide: Pancreatic triacylglycerol lipase (450 aa).

3 cysteine pairs are disulfide-bonded: Cys-4/Cys-10, Cys-91/Cys-102, and Cys-91/Cys-104. Residue Ser-153 is the Nucleophile of the active site. An N-linked (GlcNAc...) asparagine glycan is attached at Asn-167. Asp-177 serves as the catalytic Charge relay system. 4 residues coordinate Ca(2+): Glu-188, Arg-191, Asp-193, and Asp-196. A disulfide bond links Cys-238 and Cys-262. The active-site Charge relay system is His-264. Cystine bridges form between Cys-286/Cys-297, Cys-300/Cys-305, and Cys-434/Cys-450. Residues 339–450 enclose the PLAT domain; sequence WRYKVSVTLS…EEVLLTLNPC (112 aa).

Belongs to the AB hydrolase superfamily. Lipase family. In terms of assembly, forms a 1:1 stoichiometric complex with (pro)colipase/CLPS.

The protein localises to the secreted. It catalyses the reaction a triacylglycerol + H2O = a diacylglycerol + a fatty acid + H(+). The catalysed reaction is 1,2,3-tributanoylglycerol + H2O = dibutanoylglycerol + butanoate + H(+). The enzyme catalyses 1,2,3-tri-(9Z-octadecenoyl)-glycerol + H2O = di-(9Z)-octadecenoylglycerol + (9Z)-octadecenoate + H(+). It carries out the reaction all-trans-retinyl hexadecanoate + H2O = all-trans-retinol + hexadecanoate + H(+). It catalyses the reaction 1,2-di-(9Z-octadecenoyl)-glycerol + H2O = (9Z-octadecenoyl)-glycerol + (9Z)-octadecenoate + H(+). Its activity is regulated as follows. Inhibited by bile salts, is reactivated by (pro)colipase/CLPS. Its function is as follows. Plays an important role in fat metabolism. It preferentially splits the esters of long-chain fatty acids at positions 1 and 3, producing mainly 2-monoacylglycerol and free fatty acids, and shows considerably higher activity against insoluble emulsified substrates than against soluble ones. In Sus scrofa (Pig), this protein is Pancreatic triacylglycerol lipase (PNLIP).